Reading from the N-terminus, the 545-residue chain is Chaperonin GroEL (545 aa).

ATP contacts are provided by residues 29–32 (TLGP), K50, 86–90 (DGTTT), G415, and D495.

Belongs to the chaperonin (HSP60) family. As to quaternary structure, forms a cylinder of 14 subunits composed of two heptameric rings stacked back-to-back. Interacts with the co-chaperonin GroES.

The protein resides in the cytoplasm. The catalysed reaction is ATP + H2O + a folded polypeptide = ADP + phosphate + an unfolded polypeptide.. Its function is as follows. Together with its co-chaperonin GroES, plays an essential role in assisting protein folding. The GroEL-GroES system forms a nano-cage that allows encapsulation of the non-native substrate proteins and provides a physical environment optimized to promote and accelerate protein folding. This is Chaperonin GroEL from Bacteroides thetaiotaomicron (strain ATCC 29148 / DSM 2079 / JCM 5827 / CCUG 10774 / NCTC 10582 / VPI-5482 / E50).